The sequence spans 222 residues: Small ribosomal subunit protein eS1 (222 aa).

The protein belongs to the eukaryotic ribosomal protein eS1 family.

The polypeptide is Small ribosomal subunit protein eS1 (Pyrobaculum islandicum (strain DSM 4184 / JCM 9189 / GEO3)).